A 240-amino-acid chain; its full sequence is Acetoacetyl-CoA reductase (240 aa).

Residues 18–20 and 82–86 contribute to the NADP(+) site; these read RGI and NAGIT. Substrate contacts are provided by residues S134 and 141–144; that span reads NVGQ. Residue Y147 is the Proton acceptor of the active site. 177–180 lines the NADP(+) pocket; the sequence is PGFI. A substrate-binding site is contributed by 178-179; it reads GF.

This sequence belongs to the short-chain dehydrogenases/reductases (SDR) family.

It carries out the reaction a (3R)-3-hydroxyacyl-CoA + NADP(+) = a 3-oxoacyl-CoA + NADPH + H(+). It participates in biopolymer metabolism; poly-(R)-3-hydroxybutanoate biosynthesis. Its function is as follows. Catalyzes the reduction of acetoacetyl-CoA to (R)-3-hydroxybutyryl-CoA. When expressed in E.coli with Synechocystis PhaA, PhaC and PhaE confers the ability to synthesize up to 12% (w/w) poly(3-hydroxybutyrate) (PHB) depending on the carbon source. In Synechocystis sp. (strain ATCC 27184 / PCC 6803 / Kazusa), this protein is Acetoacetyl-CoA reductase.